We begin with the raw amino-acid sequence, 204 residues long: Peptide deformylase (204 aa).

C131 and H174 together coordinate Fe cation. Residue E175 is part of the active site. H178 contributes to the Fe cation binding site.

This sequence belongs to the polypeptide deformylase family. Requires Fe(2+) as cofactor.

The catalysed reaction is N-terminal N-formyl-L-methionyl-[peptide] + H2O = N-terminal L-methionyl-[peptide] + formate. Removes the formyl group from the N-terminal Met of newly synthesized proteins. Requires at least a dipeptide for an efficient rate of reaction. N-terminal L-methionine is a prerequisite for activity but the enzyme has broad specificity at other positions. This chain is Peptide deformylase, found in Streptococcus pyogenes serotype M1.